A 368-amino-acid polypeptide reads, in one-letter code: DNA-directed RNA polymerase subunit alpha (368 aa).

Residues 1–231 are alpha N-terminal domain (alpha-NTD); the sequence is MLWKGFQKPK…DHMNIFINFE (231 aa). The tract at residues 243 to 368 is alpha C-terminal domain (alpha-CTD); that stretch reads KPEIRNENLN…GFGGDNNPGF (126 aa).

The protein belongs to the RNA polymerase alpha chain family. Homodimer. The RNAP catalytic core consists of 2 alpha, 1 beta, 1 beta' and 1 omega subunit. When a sigma factor is associated with the core the holoenzyme is formed, which can initiate transcription.

It catalyses the reaction RNA(n) + a ribonucleoside 5'-triphosphate = RNA(n+1) + diphosphate. Its function is as follows. DNA-dependent RNA polymerase catalyzes the transcription of DNA into RNA using the four ribonucleoside triphosphates as substrates. This Koribacter versatilis (strain Ellin345) protein is DNA-directed RNA polymerase subunit alpha.